Reading from the N-terminus, the 260-residue chain is Triosephosphate isomerase (260 aa).

Position 10–12 (10–12 (NWK)) interacts with substrate. The Electrophile role is filled by His-100. Catalysis depends on Glu-172, which acts as the Proton acceptor. Substrate-binding positions include Gly-178, Ser-218, and 239 to 240 (GG).

This sequence belongs to the triosephosphate isomerase family. In terms of assembly, homodimer.

It localises to the cytoplasm. The catalysed reaction is D-glyceraldehyde 3-phosphate = dihydroxyacetone phosphate. It functions in the pathway carbohydrate biosynthesis; gluconeogenesis. Its pathway is carbohydrate degradation; glycolysis; D-glyceraldehyde 3-phosphate from glycerone phosphate: step 1/1. Functionally, involved in the gluconeogenesis. Catalyzes stereospecifically the conversion of dihydroxyacetone phosphate (DHAP) to D-glyceraldehyde-3-phosphate (G3P). This chain is Triosephosphate isomerase, found in Corynebacterium diphtheriae (strain ATCC 700971 / NCTC 13129 / Biotype gravis).